The following is a 388-amino-acid chain: Putative 8-amino-7-oxononanoate synthase (388 aa).

Substrate is bound at residue Arg-22. 109-110 (GY) contacts pyridoxal 5'-phosphate. Position 134 (His-134) interacts with substrate. Residues Ser-182, 207–210 (DEAH), and 237–240 (TLSK) contribute to the pyridoxal 5'-phosphate site. N6-(pyridoxal phosphate)lysine is present on Lys-240. Residue Thr-354 participates in substrate binding.

This sequence belongs to the class-II pyridoxal-phosphate-dependent aminotransferase family. BioF subfamily. As to quaternary structure, homodimer. Requires pyridoxal 5'-phosphate as cofactor.

It carries out the reaction 6-carboxyhexanoyl-[ACP] + L-alanine + H(+) = (8S)-8-amino-7-oxononanoate + holo-[ACP] + CO2. It participates in cofactor biosynthesis; biotin biosynthesis. In terms of biological role, catalyzes the decarboxylative condensation of pimeloyl-[acyl-carrier protein] and L-alanine to produce 8-amino-7-oxononanoate (AON), [acyl-carrier protein], and carbon dioxide. In Gloeobacter violaceus (strain ATCC 29082 / PCC 7421), this protein is Putative 8-amino-7-oxononanoate synthase (bioF).